The sequence spans 107 residues: Nucleoid-associated protein A1E_05550 (107 aa).

It belongs to the YbaB/EbfC family. As to quaternary structure, homodimer.

It localises to the cytoplasm. It is found in the nucleoid. Binds to DNA and alters its conformation. May be involved in regulation of gene expression, nucleoid organization and DNA protection. In Rickettsia canadensis (strain McKiel), this protein is Nucleoid-associated protein A1E_05550.